A 403-amino-acid chain; its full sequence is Malate dehydrogenase, chloroplastic (403 aa).

Residues 1–80 constitute a chloroplast transit peptide; sequence MATATSASLF…DKKPYGFKIN (80 aa). NAD(+) contacts are provided by residues 89–95 and Asp115; that span reads GAAGGIG. Positions 162 and 168 each coordinate substrate. NAD(+) contacts are provided by residues Asn175 and 198–200; that span reads ISN. 2 residues coordinate substrate: Asn200 and Arg234. His258 functions as the Proton acceptor in the catalytic mechanism. Residue Met309 coordinates NAD(+).

This sequence belongs to the LDH/MDH superfamily. MDH type 1 family. In terms of assembly, homodimer. In terms of tissue distribution, expressed in rosette leaves. Expressed in meristematic regions of roots and shoots, cotyledons, young leaves, trichomes, stamen, pollen, tapetum, gynoecium and ovules.

It localises to the plastid. The protein localises to the chloroplast stroma. It carries out the reaction (S)-malate + NAD(+) = oxaloacetate + NADH + H(+). Functionally, catalyzes a reversible NAD-dependent dehydrogenase reaction involved in central metabolism and redox homeostasis between organelle compartments. Plays a key role in the metabolism of dark chloroplasts and non-green plastids. Essential for embryo viability. Plays an essential role in heterotrophic metabolism in embryos, and autotrophic metabolism in photosynthetic tissues as well. This Arabidopsis thaliana (Mouse-ear cress) protein is Malate dehydrogenase, chloroplastic.